A 231-amino-acid chain; its full sequence is Aquaporin Z (231 aa).

The next 2 helical transmembrane spans lie at 9–29 (CFGT…AAGF) and 34–54 (IGFA…AFAV). Positions 63–65 (NPA) match the NPA 1 motif. A run of 3 helical transmembrane segments spans residues 82 to 102 (VGYV…LYLI), 129 to 149 (YSML…LLVI), and 156 to 176 (FAPA…IHLI). The NPA 2 motif lies at 186–188 (NPA). A helical transmembrane segment spans residues 202-222 (LEQLWFFWVVPIVGGIIGGLI).

The protein belongs to the MIP/aquaporin (TC 1.A.8) family. In terms of assembly, homotetramer.

It is found in the cell inner membrane. The catalysed reaction is H2O(in) = H2O(out). Its function is as follows. Channel that permits osmotically driven movement of water in both directions. It is involved in the osmoregulation and in the maintenance of cell turgor during volume expansion in rapidly growing cells. It mediates rapid entry or exit of water in response to abrupt changes in osmolarity. The sequence is that of Aquaporin Z from Escherichia coli O6:H1 (strain CFT073 / ATCC 700928 / UPEC).